We begin with the raw amino-acid sequence, 647 residues long: Shugoshin-2 (647 aa).

Position 7 is a phosphoserine (Ser-7). Coiled-coil stretches lie at residues Ser-28–Glu-87 and Asp-125–Ser-145. Residues Arg-171–Lys-295 form a disordered region. Positions Asn-200–Asn-210 are enriched in low complexity. A Phosphoserine modification is found at Ser-240. Composition is skewed to polar residues over residues Lys-242–Ala-253 and Arg-282–Pro-293. Thr-292 is modified (phosphothreonine). Phosphoserine is present on residues Ser-332 and Ser-335. Composition is skewed to polar residues over residues Ser-375 to Val-396 and Glu-462 to Pro-478. 4 disordered regions span residues Ser-375–Val-416, Arg-453–Gly-486, Thr-522–Lys-579, and Arg-593–Leu-647. Basic and acidic residues-rich tracts occupy residues Asn-528–Glu-541 and Arg-593–Val-602. A compositionally biased stretch (polar residues) spans Lys-621 to Leu-647.

Belongs to the shugoshin family.

The protein resides in the chromosome. It localises to the centromere. Its function is as follows. Involved in chromosome cohesion during mitosis and meiosis by preventing premature dissociation of cohesin complex from centromeres after prophase, when most of cohesin complex dissociates from chromosomes arms. Required for faithful mitotic chromosome segregation and proper kinetochore orientation during meiosis I. In contrast to sgo1, it is dispensable for centromeric protection of rec8 during meiosis I as well as protection of rad21 during mitosis. Required to sense the lack of tension at centromeres during mitosis. In Schizosaccharomyces pombe (strain 972 / ATCC 24843) (Fission yeast), this protein is Shugoshin-2 (sgo2).